The primary structure comprises 145 residues: Hemoglobin subunit beta-A (145 aa).

Residues 1–145 form the Globin domain; the sequence is MLTAEEKAAV…VANALAHRYH (145 aa). Residues His62 and His91 each coordinate heme b.

The protein belongs to the globin family. Heterotetramer of two alpha chains and two beta chains. As to expression, red blood cells.

Involved in oxygen transport from the lung to the various peripheral tissues. The chain is Hemoglobin subunit beta-A from Bos javanicus (Wild banteng).